The sequence spans 563 residues: Urocanate hydratase (563 aa).

NAD(+)-binding positions include 53 to 54 (GG), glutamine 131, 177 to 179 (GMG), glutamate 197, arginine 202, 243 to 244 (NA), 264 to 268 (QTSAH), 274 to 275 (YL), and tyrosine 323. Cysteine 411 is an active-site residue. NAD(+) is bound at residue glycine 493.

The protein belongs to the urocanase family. NAD(+) serves as cofactor.

It localises to the cytoplasm. It carries out the reaction 4-imidazolone-5-propanoate = trans-urocanate + H2O. Its pathway is amino-acid degradation; L-histidine degradation into L-glutamate; N-formimidoyl-L-glutamate from L-histidine: step 2/3. Its function is as follows. Catalyzes the conversion of urocanate to 4-imidazolone-5-propionate. The polypeptide is Urocanate hydratase (Yersinia enterocolitica serotype O:8 / biotype 1B (strain NCTC 13174 / 8081)).